The following is a 154-amino-acid chain: NADPH-dependent 7-cyano-7-deazaguanine reductase (154 aa).

The active-site Thioimide intermediate is the Cys-52. Residue Asp-59 is the Proton donor of the active site. Substrate contacts are provided by residues 74 to 76 and 93 to 94; these read VES and HE.

The protein belongs to the GTP cyclohydrolase I family. QueF type 1 subfamily.

Its subcellular location is the cytoplasm. The catalysed reaction is 7-aminomethyl-7-carbaguanine + 2 NADP(+) = 7-cyano-7-deazaguanine + 2 NADPH + 3 H(+). It participates in tRNA modification; tRNA-queuosine biosynthesis. Catalyzes the NADPH-dependent reduction of 7-cyano-7-deazaguanine (preQ0) to 7-aminomethyl-7-deazaguanine (preQ1). The polypeptide is NADPH-dependent 7-cyano-7-deazaguanine reductase (Paracoccus denitrificans (strain Pd 1222)).